A 28-amino-acid chain; its full sequence is Ornatin-D (28 aa).

The protein belongs to the ornatin family.

The protein localises to the secreted. In terms of biological role, potent inhibitor of fibrinogen interaction with platelet receptors expressed on glycoprotein IIb-IIIa complex. May prevent blood from clotting during either feeding and/or storage of ingested blood. This is Ornatin-D from Placobdella ornata (Turtle leech).